We begin with the raw amino-acid sequence, 153 residues long: Protein Smg homolog (153 aa).

Belongs to the Smg family.

This Neisseria gonorrhoeae (strain ATCC 700825 / FA 1090) protein is Protein Smg homolog.